A 187-amino-acid chain; its full sequence is Large ribosomal subunit protein uL6 (187 aa).

A disordered region spans residues Pro159 to Arg187.

The protein belongs to the universal ribosomal protein uL6 family. In terms of assembly, part of the 50S ribosomal subunit.

This protein binds to the 23S rRNA, and is important in its secondary structure. It is located near the subunit interface in the base of the L7/L12 stalk, and near the tRNA binding site of the peptidyltransferase center. The sequence is that of Large ribosomal subunit protein uL6 from Aquifex pyrophilus.